Consider the following 576-residue polypeptide: Immunoglobulin mu heavy chain (576 aa).

A Pyrrolidone carboxylic acid modification is found at Gln1. 5 Ig-like domains span residues 1–97 (QVTL…TYYC), 132–212 (PTLF…EHVC), 236–334 (PKVS…QNAS), 352–442 (PSFA…QTIS), and 452–553 (PDVY…RTVD). Residues 1-124 (QVTLTESGPA…VWGKGTTVTV (124 aa)) are variable (V) domain, involved in antigen recognition. Disulfide bonds link Cys22–Cys97, Cys153–Cys212, and Cys259–Cys320. 2 N-linked (GlcNAc...) asparagine glycosylation sites follow: Asn74 and Asn170. A constant (C) domain region spans residues 125–576 (SSGSASAPTL…VMSDTAGTCY (452 aa)). Residues Asn332, Asn395, and Asn402 are each glycosylated (N-linked (GlcNAc...) asparagine). 2 disulfide bridges follow: Cys367-Cys426 and Cys474-Cys536. Asn563 carries an N-linked (GlcNAc...) asparagine glycan.

Immunoglobulins are composed of two identical heavy chains and two identical light chains; disulfide-linked. It is found almost exclusively as a homopentamer in the serum. Membrane-bound IgM molecules are non-covalently associated with heterodimer of CD79A and CD79B.

Its subcellular location is the secreted. The protein resides in the cell membrane. Its function is as follows. Immunoglobulins, also known as antibodies, are membrane-bound or secreted glycoproteins produced by B lymphocytes. In the recognition phase of humoral immunity, the membrane-bound immunoglobulins serve as receptors which, upon binding of a specific antigen, trigger the clonal expansion and differentiation of B lymphocytes into immunoglobulins-secreting plasma cells. Secreted immunoglobulins mediate the effector phase of humoral immunity, which results in the elimination of bound antigens. The antigen binding site is formed by the variable domain of one heavy chain, together with that of its associated light chain. Thus, each immunoglobulin has two antigen binding sites with remarkable affinity for a particular antigen. The variable domains are assembled by a process called V-(D)-J rearrangement and can then be subjected to somatic hypermutations which, after exposure to antigen and selection, allow affinity maturation for a particular antigen. IgM antibodies play an important role in primary defense mechanisms. They have been shown to be involved in early recognition of external invaders like bacteria and viruses, cellular waste and modified self, as well as in recognition and elimination of precancerous and cancerous lesions. The membrane-bound form is found in the majority of normal B cells alongside with IgD. Membrane-bound IgM induces the phosphorylation of CD79A and CD79B by the Src family of protein tyrosine kinases. It may cause death of cells by apoptosis. It is also found in soluble form, which represents about 30% of the total serum immunoglobulins where it is found almost exclusively as a homopentamer. After the antigen binds to the B cell receptor, the secreted form is secreted in large amounts (, PubMed:16895553). This Homo sapiens (Human) protein is Immunoglobulin mu heavy chain.